The primary structure comprises 426 residues: Histidine--tRNA ligase (426 aa).

The protein belongs to the class-II aminoacyl-tRNA synthetase family.

Its subcellular location is the cytoplasm. It carries out the reaction tRNA(His) + L-histidine + ATP = L-histidyl-tRNA(His) + AMP + diphosphate + H(+). The protein is Histidine--tRNA ligase of Saccharolobus islandicus (strain L.S.2.15 / Lassen #1) (Sulfolobus islandicus).